The chain runs to 316 residues: uncharacterized protein (316 aa).

The protein belongs to the chlamydial CPn_0441/CT_007/TC_0275 family.

This is an uncharacterized protein from Chlamydia pneumoniae (Chlamydophila pneumoniae).